The following is a 998-amino-acid chain: Kinesin-like protein KIF19 (998 aa).

The region spanning 11–346 (QLMVALRVRP…LTYAGRAKNI (336 aa)) is the Kinesin motor domain. 104–111 (GPTGCGKT) is a binding site for ATP. 2 coiled-coil regions span residues 360-391 (HIAQ…RGQA) and 424-452 (EQLA…EVQI). Residues 482–494 (ECYAKDDSEKDSD) are compositionally biased toward basic and acidic residues. The disordered stretch occupies residues 482 to 503 (ECYAKDDSEKDSDTGDDQPDIL). Residues 507–552 (EVAAARESIAALVDEQKQLRKQKLALEQRCRELRARGRRLEETLPR) adopt a coiled-coil conformation. Polar residues-rich tracts occupy residues 662–676 (SSLP…SLTP), 684–697 (KTLS…QNSA), 746–761 (SLGS…SENL), and 836–852 (TLQH…STGE). Disordered stretches follow at residues 662 to 706 (SSLP…TESE), 746 to 765 (SLGS…SEIP), 794 to 911 (GTEG…THLL), and 948 to 998 (KLPP…SRHN). The segment covering 989-998 (HGKDGCSRHN) has biased composition (basic and acidic residues).

The protein belongs to the TRAFAC class myosin-kinesin ATPase superfamily. Kinesin family.

The protein localises to the cytoplasm. Its subcellular location is the cytoskeleton. The protein resides in the cell projection. It is found in the cilium. Functionally, plus end-directed microtubule-dependent motor protein that regulates the length of motile cilia by mediating depolymerization of microtubules at ciliary tips. In Homo sapiens (Human), this protein is Kinesin-like protein KIF19 (KIF19).